Reading from the N-terminus, the 680-residue chain is DNA-directed RNA polymerase subunit beta' (680 aa).

Zn(2+) contacts are provided by Cys69, Cys71, Cys87, and Cys90. Residues Asp489, Asp491, and Asp493 each contribute to the Mg(2+) site.

Belongs to the RNA polymerase beta' chain family. RpoC1 subfamily. In terms of assembly, in plastids the minimal PEP RNA polymerase catalytic core is composed of four subunits: alpha, beta, beta', and beta''. When a (nuclear-encoded) sigma factor is associated with the core the holoenzyme is formed, which can initiate transcription. Mg(2+) serves as cofactor. It depends on Zn(2+) as a cofactor.

The protein resides in the plastid. The protein localises to the chloroplast. It carries out the reaction RNA(n) + a ribonucleoside 5'-triphosphate = RNA(n+1) + diphosphate. In terms of biological role, DNA-dependent RNA polymerase catalyzes the transcription of DNA into RNA using the four ribonucleoside triphosphates as substrates. The sequence is that of DNA-directed RNA polymerase subunit beta' from Amborella trichopoda.